Here is a 131-residue protein sequence, read N- to C-terminus: Large ribosomal subunit protein bL12 (131 aa).

The segment covering 99 to 125 (ESTPKPIKEGTNKDDAEETKKKLEEAG) has biased composition (basic and acidic residues). Residues 99-131 (ESTPKPIKEGTNKDDAEETKKKLEEAGAKVTVK) are disordered.

This sequence belongs to the bacterial ribosomal protein bL12 family. Homodimer. Part of the ribosomal stalk of the 50S ribosomal subunit. Forms a multimeric L10(L12)X complex, where L10 forms an elongated spine to which 2 to 4 L12 dimers bind in a sequential fashion. Binds GTP-bound translation factors.

Forms part of the ribosomal stalk which helps the ribosome interact with GTP-bound translation factors. Is thus essential for accurate translation. This chain is Large ribosomal subunit protein bL12, found in Gloeothece citriformis (strain PCC 7424) (Cyanothece sp. (strain PCC 7424)).